The sequence spans 699 residues: (E2-independent) E3 ubiquitin-conjugating enzyme FATS (699 aa).

Residues Met-48–Arg-116 are required for interaction with p53/TP53. 3 disordered regions span residues Leu-107 to Arg-134, Lys-443 to His-473, and Lys-528 to Ser-569. Composition is skewed to basic and acidic residues over residues Ser-113–Pro-129 and Cys-460–His-473. A required for interaction with HDAC1 region spans residues Arg-116–Val-224. Over residues Thr-534–Ala-545 the composition is skewed to pro residues. An ALMS motif region spans residues Thr-571–Val-699.

Interacts with HDAC1; the interaction prevents binding of HDAC1 to CDKN1A/p21 and facilitates the acetylation and stabilization of CDKN1A/p21. Interacts with p53/TP53; the interaction inhibits binding of p53/TP53 and MDM2.

The protein resides in the cytoplasm. It localises to the cytoskeleton. It is found in the microtubule organizing center. Its subcellular location is the centrosome. In terms of biological role, tumor suppressor that is required to sustain G2/M checkpoint after DNA damage. Acts as a p53/TP53 activator by inhibiting MDM2 binding to p53/TP53 and stimulating non-proteolytic polyubiquitination of p53/TP53. Exhibits ubiquitin ligase (E3) activity and assemble ubiquitin polymers through 'Lys-11'- (K11-), 'Lys-29'- (K29-) and 'Lys-63'- (K63)-linkages, independently of the ubiquitin-conjugating enzyme (E2). Promotes p53/TP53-dependent transcription of CDKN1A/p21, leading to robust checkpoint response. Mediates CDKN1A/p21 protein stability in a ubiquitin-independent manner. Interacts with HDAC1 and prevents binding of HDAC1 to CDKN1A/p21 and facilitates the acetylation and stabilization of CDKN1A/p21. May have a role in the assembly of primary cilia. In Homo sapiens (Human), this protein is (E2-independent) E3 ubiquitin-conjugating enzyme FATS.